The following is a 94-amino-acid chain: Small ribosomal subunit protein bS20 (94 aa).

This sequence belongs to the bacterial ribosomal protein bS20 family.

In terms of biological role, binds directly to 16S ribosomal RNA. This is Small ribosomal subunit protein bS20 from Aquifex aeolicus (strain VF5).